The sequence spans 136 residues: Large ribosomal subunit protein uL16 (136 aa).

Belongs to the universal ribosomal protein uL16 family. Part of the 50S ribosomal subunit.

In terms of biological role, binds 23S rRNA and is also seen to make contacts with the A and possibly P site tRNAs. In Glaesserella parasuis serovar 5 (strain SH0165) (Haemophilus parasuis), this protein is Large ribosomal subunit protein uL16.